Reading from the N-terminus, the 156-residue chain is Acyl carrier protein, mitochondrial (156 aa).

Residues 1–68 constitute a mitochondrion transit peptide; it reads MAVRVLCACV…GRVTQLCRQY (68 aa). In terms of domain architecture, Carrier spans 77–152; it reads EGIKDRVLYV…EIVDYIADKK (76 aa). Lys-88 bears the N6-acetyllysine mark. An O-(pantetheine 4'-phosphoryl)serine modification is found at Ser-112.

Mammalian complex I is composed of 45 different subunits. Interacts with ETFRF1. Identified in a complex composed of MALSU1, MIEF1 upstream open reading frame protein and NDUFAB1; within the trimeric complex MIEF1 upstream open reading frame protein functions as a bridging scaffold that interacts with MALSU1 on one side, and with NDUFAB1 on the other side. The complex interacts with the mitochondrial large ribosomal subunit. Interacts with alpha-1-microglobulin chain; this interaction is required for the maintenance of mitochondrial redox homeostasis. Component of the mitochondrial core iron-sulfur cluster (ISC) complex composed of NFS1, LYRM4, NDUFAB1, ISCU, FXN, and FDX2; this complex is a heterohexamer containing two copies of each monomer. Component of the cyteine desulfurase complex composed of NFS1, LYRM4 and NDUFAB1; this complex contributes to the stability and cysteine desulfurase activity of NFS1. Post-translationally, phosphopantetheinylation at Ser-112 is essential for interactions with LYR motif-containing proteins.

The protein resides in the mitochondrion. Functionally, carrier of the growing fatty acid chain in fatty acid biosynthesis. Accessory and non-catalytic subunit of the mitochondrial membrane respiratory chain NADH dehydrogenase (Complex I), which functions in the transfer of electrons from NADH to the respiratory chain. Accessory protein, of the core iron-sulfur cluster (ISC) assembly complex, that regulates, in association with LYRM4, the stability and the cysteine desulfurase activity of NFS1 and participates in the [2Fe-2S] clusters assembly on the scaffolding protein ISCU. The core iron-sulfur cluster (ISC) assembly complex is involved in the de novo synthesis of a [2Fe-2S] cluster, the first step of the mitochondrial iron-sulfur protein biogenesis. This process is initiated by the cysteine desulfurase complex (NFS1:LYRM4:NDUFAB1) that produces persulfide which is delivered on the scaffold protein ISCU in a FXN-dependent manner. Then this complex is stabilized by FDX2 which provides reducing equivalents to accomplish the [2Fe-2S] cluster assembly. Finally, the [2Fe-2S] cluster is transferred from ISCU to chaperone proteins, including HSCB, HSPA9 and GLRX5. This Bos taurus (Bovine) protein is Acyl carrier protein, mitochondrial.